Here is a 212-residue protein sequence, read N- to C-terminus: Tubulin alpha chain (212 aa).

GTP is bound by residues Asn-3 and Asn-25. Residue Glu-51 is part of the active site.

The protein belongs to the tubulin family. As to quaternary structure, dimer of alpha and beta chains. A typical microtubule is a hollow water-filled tube with an outer diameter of 25 nm and an inner diameter of 15 nM. Alpha-beta heterodimers associate head-to-tail to form protofilaments running lengthwise along the microtubule wall with the beta-tubulin subunit facing the microtubule plus end conferring a structural polarity. Microtubules usually have 13 protofilaments but different protofilament numbers can be found in some organisms and specialized cells. Requires Mg(2+) as cofactor.

The protein localises to the cytoplasm. It localises to the cytoskeleton. It carries out the reaction GTP + H2O = GDP + phosphate + H(+). Functionally, tubulin is the major constituent of microtubules, a cylinder consisting of laterally associated linear protofilaments composed of alpha- and beta-tubulin heterodimers. Microtubules grow by the addition of GTP-tubulin dimers to the microtubule end, where a stabilizing cap forms. Below the cap, tubulin dimers are in GDP-bound state, owing to GTPase activity of alpha-tubulin. This is Tubulin alpha chain (TUB-A) from Pneumocystis carinii.